Consider the following 280-residue polypeptide: Probable aquaporin PIP2-8 (280 aa).

The interval 1-21 (MAAGSGSGSNPKDYQDPPPAP) is disordered. Transmembrane regions (helical) follow at residues 36 to 56 (AAIA…STVI) and 70 to 92 (LGIA…GISG). Residues 96 to 98 (NPA) carry the NPA 1 motif. 3 helical membrane passes run 113 to 135 (RAAL…ARAM), 156 to 176 (SAGA…YTVF), and 192 to 212 (VLAP…TIPI). Positions 218 to 220 (NPA) match the NPA 2 motif. Residues 236-256 (AWSHLWIFWVGPFAGAAAAMI) traverse the membrane as a helical segment.

It belongs to the MIP/aquaporin (TC 1.A.8) family. PIP (TC 1.A.8.11) subfamily. As to expression, expressed in leaves and at lower levels in roots.

It localises to the cell membrane. Aquaporins facilitate the transport of water and small neutral solutes across cell membranes. In Oryza sativa subsp. japonica (Rice), this protein is Probable aquaporin PIP2-8 (PIP2-8).